The sequence spans 359 residues: Protein URE2 (359 aa).

Positions 39–82 (FSAGVNNNNNNSSSSNNNNNNNNNAQNNNSGRNGSQSNDNGNNI) are disordered. Over residues 44-81 (NNNNNNSSSSNNNNNNNNNAQNNNSGRNGSQSNDNGNN) the composition is skewed to low complexity. In terms of domain architecture, GST N-terminal spans 117–201 (EGYTLFSHRS…HLVNKYYKET (85 aa)). In terms of domain architecture, GST C-terminal spans 210–359 (DLADQSQINA…PAVIKALRGE (150 aa)).

It belongs to the GST superfamily. In terms of assembly, homodimer.

Its function is as follows. Plays an important role in the cellular response to the nitrogen source. URE2 gene plays a major part in the repression of GLN1 and GDH2 genes by glutamine, and is required for the inactivation of glutamine synthetase. URE2 gene product may catalytically inactivate GLN3 in response to an increase in the intracellular concentration of glutamine. This is Protein URE2 (URE2) from Saccharomyces paradoxus (Yeast).